The following is a 240-amino-acid chain: Enoyl-CoA delta isomerase 2, peroxisomal (240 aa).

The Microbody targeting signal signature appears at 238-240 (PKL).

The protein belongs to the enoyl-CoA hydratase/isomerase family.

It localises to the peroxisome. The enzyme catalyses a (3Z)-enoyl-CoA = a 4-saturated (2E)-enoyl-CoA. It carries out the reaction a (3E)-enoyl-CoA = a 4-saturated (2E)-enoyl-CoA. The protein operates within lipid metabolism; fatty acid beta-oxidation. In terms of biological role, able to isomerize both 3-cis and 3-trans double bonds into the 2-trans form in a range of enoyl-CoA species. Essential for the beta oxidation of unsaturated fatty acids. Involved with IBR1 and IBR3 in the peroxisomal beta-oxidation of indole-3-butyric acid (IBA) to form indole-3-acetic acid (IAA), a biologically active auxin. The sequence is that of Enoyl-CoA delta isomerase 2, peroxisomal from Arabidopsis thaliana (Mouse-ear cress).